The chain runs to 287 residues: ATP synthase gamma chain (287 aa).

Belongs to the ATPase gamma chain family. As to quaternary structure, F-type ATPases have 2 components, CF(1) - the catalytic core - and CF(0) - the membrane proton channel. CF(1) has five subunits: alpha(3), beta(3), gamma(1), delta(1), epsilon(1). CF(0) has three main subunits: a, b and c.

Its subcellular location is the cell inner membrane. Functionally, produces ATP from ADP in the presence of a proton gradient across the membrane. The gamma chain is believed to be important in regulating ATPase activity and the flow of protons through the CF(0) complex. The protein is ATP synthase gamma chain of Sodalis glossinidius (strain morsitans).